Consider the following 414-residue polypeptide: Protein DNA-DAMAGE INDUCIBLE 1 (414 aa).

A Ubiquitin-like domain is found at 1–76 (MRITVMTAGE…LMMMVSNASS (76 aa)). One can recognise a Peptidase A2 domain in the interval 213-292 (LKAFVDSGAQ…NMEFLFGLDM (80 aa)). Residue Asp-218 is part of the active site. The interval 332-374 (ERVPNDASSSGATVPSGFTEKKNNTVANPTSQQPKRQNTSEGP) is disordered. Polar residues predominate over residues 355–372 (NTVANPTSQQPKRQNTSE). In terms of domain architecture, UBA spans 374–414 (PEFEAKIAKLVELGFSRDSVIQALKLFEGNEEQAAGFLFGG).

Belongs to the DDI1 family. Homodimer.

It localises to the cytoplasm. Its subcellular location is the cytosol. Receptor of ubiquitinated protein targeted to ubiquitin/proteasome-mediated proteolysis (UPP). Relatively weak affinity for both 'Lys-48'- and 'Lys-63'-linked ubiquitin chains with a slight preference for 'Lys-48-'linked chains of three or more ubiquitin units. This Arabidopsis thaliana (Mouse-ear cress) protein is Protein DNA-DAMAGE INDUCIBLE 1.